The primary structure comprises 157 residues: Siroheme decarboxylase NirG subunit (157 aa).

The protein belongs to the Ahb/Nir family. As to quaternary structure, forms a complex composed of NirDL, NirG and NirH. All proteins are required for the total conversion of siroheme to didecarboxysiroheme.

The catalysed reaction is siroheme + 2 H(+) = 12,18-didecarboxysiroheme + 2 CO2. Its pathway is porphyrin-containing compound metabolism. Involved in heme d1 biosynthesis. Catalyzes the decarboxylation of siroheme into didecarboxysiroheme. Siroheme is probably decarboxylated to monodecarboxysiroheme, which is in turn decarboxylated to didecarboxysiroheme. This Paracoccus pantotrophus (Thiosphaera pantotropha) protein is Siroheme decarboxylase NirG subunit.